The primary structure comprises 374 residues: MARSLTWGCCPWCLTEEEKTAARIDQEINKILLEQKKQERGELKLLLLGPGESGKSTFIKQMRIIHGAGYSEEDRRAFRLLVYQNIFVSMQAMIEAMDRLQIPFSRPDSKQHASLVMTQDPYKVSSFEKPYAVAMQYLWRDAGIRACYERRREFHLLDSAVYYLSHLERIAEDDYIPTAQDVLRSRMPTTGINEYCFSVQKTKLRIVDAGGQKSERKKWIHCFENVIALIYLASLSEYDQCLEENSQENRMKESLALFSTILELPWFKSTSVILFLNKTDILEDKIHTSHLASYFPSFQGPRRDAEAAKRFILDMYARVYASCAEPHDGGRKGSRARRLFAHFTCATDTHSVRSVFKDVRDSVLARYLDEINLL.

Positions 41–374 (GELKLLLLGP…ARYLDEINLL (334 aa)) constitute a G-alpha domain. The segment at 44–57 (KLLLLGPGESGKST) is G1 motif. Residues 49-56 (GPGESGKS), 183-189 (LRSRMPT), 208-212 (DAGGQ), 277-280 (NKTD), and A346 contribute to the GTP site. Residues S56 and T189 each contribute to the Mg(2+) site. Residues 181–189 (DVLRSRMPT) form a G2 motif region. The segment at 204-213 (LRIVDAGGQK) is G3 motif. The G4 motif stretch occupies residues 273-280 (ILFLNKTD). The interval 344–349 (TCATDT) is G5 motif.

This sequence belongs to the G-alpha family. G(q) subfamily. G proteins are composed of 3 units; alpha, beta and gamma. The alpha chain contains the guanine nucleotide binding site.

Functionally, guanine nucleotide-binding proteins (G proteins) are involved as modulators or transducers in various transmembrane signaling systems. The protein is Guanine nucleotide-binding protein subunit alpha-15 (Gna15) of Rattus norvegicus (Rat).